We begin with the raw amino-acid sequence, 166 residues long: Transcriptional repressor NrdR (166 aa).

A zinc finger lies at 3–34; sequence CPFCGFSDSRVLDSRPTVEGNSIRRRRECCGC. In terms of domain architecture, ATP-cone spans 49–139; it reads LIVVKKDGRR…VYREFRDAES (91 aa).

Belongs to the NrdR family. Zn(2+) is required as a cofactor.

In terms of biological role, negatively regulates transcription of bacterial ribonucleotide reductase nrd genes and operons by binding to NrdR-boxes. This chain is Transcriptional repressor NrdR, found in Pelotomaculum thermopropionicum (strain DSM 13744 / JCM 10971 / SI).